The following is a 186-amino-acid chain: MAVARAGVLGVQWLQRASRNVMPLGARTASHMTKDMFPGPYPRTPEERAAAAKKYNMRVEDYEPYPDDGMGYGDYPKLPDRSQHERDPWYSWDQPGLRLNWGEPMHWHLDMYNRNRVDTSPTPVSWHVMCMQLFGFLAFMIFMCWVGDVYPVYQPVGPKQYPYNNLYLERGGDPSKEPERVVHYEI.

The transit peptide at 1–28 (MAVARAGVLGVQWLQRASRNVMPLGART) directs the protein to the mitochondrion. The chain crosses the membrane as a helical span at residues 133–153 (LFGFLAFMIFMCWVGDVYPVY).

This sequence belongs to the complex I NDUFB8 subunit family. Complex I is composed of 45 different subunits.

It is found in the mitochondrion inner membrane. Functionally, accessory subunit of the mitochondrial membrane respiratory chain NADH dehydrogenase (Complex I), that is believed not to be involved in catalysis. Complex I functions in the transfer of electrons from NADH to the respiratory chain. The immediate electron acceptor for the enzyme is believed to be ubiquinone. This chain is NADH dehydrogenase [ubiquinone] 1 beta subcomplex subunit 8, mitochondrial (NDUFB8), found in Homo sapiens (Human).